The primary structure comprises 94 residues: Small ribosomal subunit protein bS20 (94 aa).

Basic and acidic residues predominate over residues 1-10; the sequence is MANHASADKR. Residues 1–20 form a disordered region; the sequence is MANHASADKRNRQRITRTAR. A compositionally biased stretch (basic residues) spans 11–20; it reads NRQRITRTAR.

The protein belongs to the bacterial ribosomal protein bS20 family.

Binds directly to 16S ribosomal RNA. The polypeptide is Small ribosomal subunit protein bS20 (Sorangium cellulosum (strain So ce56) (Polyangium cellulosum (strain So ce56))).